The primary structure comprises 100 residues: Small ribosomal subunit protein uS14 (100 aa).

The protein belongs to the universal ribosomal protein uS14 family. As to quaternary structure, part of the 30S ribosomal subunit. Contacts proteins S3 and S10.

In terms of biological role, binds 16S rRNA, required for the assembly of 30S particles and may also be responsible for determining the conformation of the 16S rRNA at the A site. This chain is Small ribosomal subunit protein uS14, found in Prochlorococcus marinus (strain MIT 9313).